A 206-amino-acid chain; its full sequence is Large ribosomal subunit protein uL4 (206 aa).

Positions 63–85 are disordered; that stretch reads MYKQKGTGSARHGSARAPQFRGG.

The protein belongs to the universal ribosomal protein uL4 family. As to quaternary structure, part of the 50S ribosomal subunit.

One of the primary rRNA binding proteins, this protein initially binds near the 5'-end of the 23S rRNA. It is important during the early stages of 50S assembly. It makes multiple contacts with different domains of the 23S rRNA in the assembled 50S subunit and ribosome. Its function is as follows. Forms part of the polypeptide exit tunnel. The protein is Large ribosomal subunit protein uL4 of Beijerinckia indica subsp. indica (strain ATCC 9039 / DSM 1715 / NCIMB 8712).